The sequence spans 248 residues: 2,3-dihydro-2,3-dihydroxybenzoate dehydrogenase (248 aa).

An NAD(+)-binding site is contributed by 9-33; the sequence is WVTGAGKGIGYATALAFVEAGAKVT. Ser131 serves as a coordination point for substrate. Tyr144 serves as the catalytic Proton acceptor.

The protein belongs to the short-chain dehydrogenases/reductases (SDR) family. As to quaternary structure, homotetramer; dimer of dimers. EntA and EntE interact together.

It carries out the reaction (2S,3S)-2,3-dihydroxy-2,3-dihydrobenzoate + NAD(+) = 2,3-dihydroxybenzoate + NADH + H(+). Its pathway is siderophore biosynthesis; enterobactin biosynthesis. Its activity is regulated as follows. Inhibited by cis-2-hydroxy-3-cyclohexen-1-carboxylate, cis-2-hydroxycyclohexane-1-carboxylate and trans-2-hydroxycyclohexane-1-carboxylate. Functionally, involved in the biosynthesis of the siderophore enterobactin (enterochelin), which is a macrocyclic trimeric lactone of N-(2,3-dihydroxybenzoyl)-serine. Catalyzes the reversible NAD-dependent oxidation of the C3-hydroxyl group of 2,3-dihydro-2,3-dihydroxybenzoate (2,3-diDHB), producing the transient intermediate 2-hydroxy-3-oxo-4,6-cyclohexadiene-1-carboxylate, which undergoes rapid aromatization to the final product, 2,3-dihydroxybenzoate (2,3-DHB). Only the compounds with a C3-hydroxyl group such as methyl 2,3-dihydro-2,3-dihydroxybenzoate, methyl-3-hydroxy-1,4-cyclohexadiene-1-carboxylate, trans-3-hydroxy-2-cyclohexene-1-carboxylate, cis-3-hydroxy-4-cyclohexene-1-carboxylate, cis-3-hydroxycyclohexane-1-carboxylic acid are oxidized to the corresponding ketone products. The stereospecificity of the C3 allylic alcohol group oxidation is 3R in a 1R,3R dihydro substrate. It can also increase the DHB-AMP ligase activity of EntE by interaction EntE. In Escherichia coli (strain K12), this protein is 2,3-dihydro-2,3-dihydroxybenzoate dehydrogenase.